The chain runs to 475 residues: Glycogen synthase (475 aa).

Lysine 15 contacts ADP-alpha-D-glucose.

This sequence belongs to the glycosyltransferase 1 family. Bacterial/plant glycogen synthase subfamily.

The catalysed reaction is [(1-&gt;4)-alpha-D-glucosyl](n) + ADP-alpha-D-glucose = [(1-&gt;4)-alpha-D-glucosyl](n+1) + ADP + H(+). It functions in the pathway glycan biosynthesis; glycogen biosynthesis. Functionally, synthesizes alpha-1,4-glucan chains using ADP-glucose. This Alkaliphilus metalliredigens (strain QYMF) protein is Glycogen synthase.